Reading from the N-terminus, the 110-residue chain is Nucleoid-associated protein bbp_426 (110 aa).

It belongs to the YbaB/EbfC family. Homodimer.

The protein localises to the cytoplasm. Its subcellular location is the nucleoid. In terms of biological role, binds to DNA and alters its conformation. May be involved in regulation of gene expression, nucleoid organization and DNA protection. This chain is Nucleoid-associated protein bbp_426, found in Buchnera aphidicola subsp. Baizongia pistaciae (strain Bp).